The following is a 365-amino-acid chain: ATP-dependent (S)-NAD(P)H-hydrate dehydratase (365 aa).

The transit peptide at 1 to 43 (MLVKPSIISGLVRLTSHSPSSSSSVLRRQEFLVRTLCGSPIIR) directs the protein to the chloroplast. L2 bears the N-acetylserine mark. Positions 53 to 361 (AESVLRTVTP…ECLGESLEDI (309 aa)) constitute a YjeF C-terminal domain. (6S)-NADPHX contacts are provided by residues G169 and 222–228 (NVNEYKR). ATP is bound by residues 262–266 (KGKSD) and 281–290 (GSPRRCGGQG). D291 serves as a coordination point for (6S)-NADPHX.

It belongs to the NnrD/CARKD family. Mg(2+) serves as cofactor.

It localises to the plastid. It is found in the chloroplast. The protein localises to the cytoplasm. The catalysed reaction is (6S)-NADHX + ATP = ADP + phosphate + NADH + H(+). It catalyses the reaction (6S)-NADPHX + ATP = ADP + phosphate + NADPH + H(+). Catalyzes the dehydration of the S-form of NAD(P)HX at the expense of ATP, which is converted to ADP. Together with NAD(P)HX epimerase, which catalyzes the epimerization of the S- and R-forms, the enzyme allows the repair of both epimers of NAD(P)HX, a damaged form of NAD(P)H that is a result of enzymatic or heat-dependent hydration. This is ATP-dependent (S)-NAD(P)H-hydrate dehydratase from Arabidopsis thaliana (Mouse-ear cress).